A 447-amino-acid polypeptide reads, in one-letter code: Probable butyrate:acetyl-CoA coenzyme A-transferase (447 aa).

A CoA-binding site is contributed by G220–T224. The active-site 5-glutamyl coenzyme A thioester intermediate is E245. The CoA site is built by I320 and G343.

It belongs to the acetyl-CoA hydrolase/transferase family.

The protein localises to the cytoplasm. It carries out the reaction butanoate + acetyl-CoA = butanoyl-CoA + acetate. It participates in lipid metabolism; butanoate metabolism. Functionally, coenzyme A-transferase that converts butyrate to butyryl-CoA. Involved in the syntrophic growth of S.wolfei on butyrate in cooperation with methanogens or an appropriate hydrogen-scavenging bacterium, as part of the butyrate oxidation pathway. The sequence is that of Probable butyrate:acetyl-CoA coenzyme A-transferase from Syntrophomonas wolfei subsp. wolfei (strain DSM 2245B / Goettingen).